The following is a 364-amino-acid chain: Triacylglycerol lipase (364 aa).

Positions 1-44 (MARTMRSRVVAGAVACAMSIAPFAGTTAVMTLATTHAAMAATAP) are cleaved as a signal peptide. One can recognise an AB hydrolase-1 domain in the interval 54-266 (PIILVHGLSG…AIQPTLSVFG (213 aa)). Position 61 (Leu61) interacts with substrate. The Nucleophile role is filled by Ser131. A substrate-binding site is contributed by Gln132. The cysteines at positions 234 and 314 are disulfide-linked. Residue Asp286 coordinates Ca(2+). Active-site charge relay system residues include Asp308 and His330. Positions 332, 336, and 340 each coordinate Ca(2+).

Belongs to the AB hydrolase superfamily. Pseudomonas lipase family. Monomer. The cofactor is Ca(2+).

Its subcellular location is the secreted. It catalyses the reaction a triacylglycerol + H2O = a diacylglycerol + a fatty acid + H(+). Inhibited by RC-(Rp,Sp)- and SC-(Rp,Sp)-1,2-dioctylcarbamoylglycero-3-O-p-nitrophenyl octylphosphonate. Also inhibited by diethyl-p-nitrophenylphosphate (E600). Its function is as follows. Catalyzes the hydrolysis of triacylglycerol. It shows a preference for triacylglycerols with a chain length between 6 and 12 carbons. The protein is Triacylglycerol lipase of Burkholderia cepacia (Pseudomonas cepacia).